The chain runs to 231 residues: Probable pyridoxamine 5'-phosphate oxidase (231 aa).

20 to 23 provides a ligand contact to pyridoxal 5'-phosphate; sequence QYEK. 74–77 contributes to the FMN binding site; the sequence is RLVL. Position 79 (Lys-79) interacts with pyridoxal 5'-phosphate. Residues 89–90, 96–97, and Gln-119 contribute to the FMN site; these read FT and KK. Residues Tyr-137, Arg-141, and Ser-145 each contribute to the pyridoxal 5'-phosphate site. FMN contacts are provided by residues 154 to 155 and Trp-202; that span reads QS. 208-210 provides a ligand contact to pyridoxal 5'-phosphate; it reads RLH. An FMN-binding site is contributed by Arg-212.

The protein belongs to the pyridoxamine 5'-phosphate oxidase family. As to quaternary structure, homodimer. Requires FMN as cofactor.

It catalyses the reaction pyridoxamine 5'-phosphate + O2 + H2O = pyridoxal 5'-phosphate + H2O2 + NH4(+). The catalysed reaction is pyridoxine 5'-phosphate + O2 = pyridoxal 5'-phosphate + H2O2. It participates in cofactor metabolism; pyridoxal 5'-phosphate salvage; pyridoxal 5'-phosphate from pyridoxamine 5'-phosphate: step 1/1. It functions in the pathway cofactor metabolism; pyridoxal 5'-phosphate salvage; pyridoxal 5'-phosphate from pyridoxine 5'-phosphate: step 1/1. Catalyzes the oxidation of either pyridoxine 5'-phosphate (PNP) or pyridoxamine 5'-phosphate (PMP) into pyridoxal 5'-phosphate (PLP). The chain is Probable pyridoxamine 5'-phosphate oxidase from Schizosaccharomyces pombe (strain 972 / ATCC 24843) (Fission yeast).